A 536-amino-acid polypeptide reads, in one-letter code: Bifunctional purine biosynthesis protein PurH (536 aa).

The 151-residue stretch at isoleucine 8 to threonine 158 folds into the MGS-like domain.

This sequence belongs to the PurH family.

The enzyme catalyses (6R)-10-formyltetrahydrofolate + 5-amino-1-(5-phospho-beta-D-ribosyl)imidazole-4-carboxamide = 5-formamido-1-(5-phospho-D-ribosyl)imidazole-4-carboxamide + (6S)-5,6,7,8-tetrahydrofolate. The catalysed reaction is IMP + H2O = 5-formamido-1-(5-phospho-D-ribosyl)imidazole-4-carboxamide. It participates in purine metabolism; IMP biosynthesis via de novo pathway; 5-formamido-1-(5-phospho-D-ribosyl)imidazole-4-carboxamide from 5-amino-1-(5-phospho-D-ribosyl)imidazole-4-carboxamide (10-formyl THF route): step 1/1. The protein operates within purine metabolism; IMP biosynthesis via de novo pathway; IMP from 5-formamido-1-(5-phospho-D-ribosyl)imidazole-4-carboxamide: step 1/1. The chain is Bifunctional purine biosynthesis protein PurH from Sinorhizobium fredii (strain NBRC 101917 / NGR234).